Here is a 176-residue protein sequence, read N- to C-terminus: Large ribosomal subunit protein uL6 (176 aa).

The protein belongs to the universal ribosomal protein uL6 family. Part of the 50S ribosomal subunit.

In terms of biological role, this protein binds to the 23S rRNA, and is important in its secondary structure. It is located near the subunit interface in the base of the L7/L12 stalk, and near the tRNA binding site of the peptidyltransferase center. The protein is Large ribosomal subunit protein uL6 of Methanothrix thermoacetophila (strain DSM 6194 / JCM 14653 / NBRC 101360 / PT) (Methanosaeta thermophila).